The following is a 251-amino-acid chain: Imidazole glycerol phosphate synthase subunit HisF (251 aa).

Catalysis depends on residues Asp-12 and Asp-131.

Belongs to the HisA/HisF family. In terms of assembly, heterodimer of HisH and HisF.

The protein localises to the cytoplasm. The enzyme catalyses 5-[(5-phospho-1-deoxy-D-ribulos-1-ylimino)methylamino]-1-(5-phospho-beta-D-ribosyl)imidazole-4-carboxamide + L-glutamine = D-erythro-1-(imidazol-4-yl)glycerol 3-phosphate + 5-amino-1-(5-phospho-beta-D-ribosyl)imidazole-4-carboxamide + L-glutamate + H(+). The protein operates within amino-acid biosynthesis; L-histidine biosynthesis; L-histidine from 5-phospho-alpha-D-ribose 1-diphosphate: step 5/9. Functionally, IGPS catalyzes the conversion of PRFAR and glutamine to IGP, AICAR and glutamate. The HisF subunit catalyzes the cyclization activity that produces IGP and AICAR from PRFAR using the ammonia provided by the HisH subunit. This Streptomyces avermitilis (strain ATCC 31267 / DSM 46492 / JCM 5070 / NBRC 14893 / NCIMB 12804 / NRRL 8165 / MA-4680) protein is Imidazole glycerol phosphate synthase subunit HisF.